The primary structure comprises 676 residues: DNA ligase (676 aa).

NAD(+) is bound by residues 41–45, 90–91, and glutamate 123; these read DLTYD and SL. Catalysis depends on lysine 125, which acts as the N6-AMP-lysine intermediate. Positions 146, 180, 293, and 317 each coordinate NAD(+). Residues cysteine 408, cysteine 411, cysteine 424, and cysteine 429 each coordinate Zn(2+).

It belongs to the NAD-dependent DNA ligase family. LigA subfamily. Mg(2+) serves as cofactor. It depends on Mn(2+) as a cofactor.

The enzyme catalyses NAD(+) + (deoxyribonucleotide)n-3'-hydroxyl + 5'-phospho-(deoxyribonucleotide)m = (deoxyribonucleotide)n+m + AMP + beta-nicotinamide D-nucleotide.. DNA ligase that catalyzes the formation of phosphodiester linkages between 5'-phosphoryl and 3'-hydroxyl groups in double-stranded DNA using NAD as a coenzyme and as the energy source for the reaction. It is essential for DNA replication and repair of damaged DNA. The chain is DNA ligase from Borrelia turicatae (strain 91E135).